A 938-amino-acid chain; its full sequence is Isoleucine--tRNA ligase (938 aa).

The 'HIGH' region motif lies at 61–71 (PYANGDIHLGT). Glu-559 serves as a coordination point for L-isoleucyl-5'-AMP. A 'KMSKS' region motif is present at residues 601 to 605 (KMSKS). Residue Lys-604 coordinates ATP. Positions 904, 907, 923, and 926 each coordinate Zn(2+).

This sequence belongs to the class-I aminoacyl-tRNA synthetase family. IleS type 1 subfamily. Monomer. It depends on Zn(2+) as a cofactor.

The protein resides in the cytoplasm. The enzyme catalyses tRNA(Ile) + L-isoleucine + ATP = L-isoleucyl-tRNA(Ile) + AMP + diphosphate. Functionally, catalyzes the attachment of isoleucine to tRNA(Ile). As IleRS can inadvertently accommodate and process structurally similar amino acids such as valine, to avoid such errors it has two additional distinct tRNA(Ile)-dependent editing activities. One activity is designated as 'pretransfer' editing and involves the hydrolysis of activated Val-AMP. The other activity is designated 'posttransfer' editing and involves deacylation of mischarged Val-tRNA(Ile). This chain is Isoleucine--tRNA ligase, found in Symbiobacterium thermophilum (strain DSM 24528 / JCM 14929 / IAM 14863 / T).